The chain runs to 328 residues: Phosphate acyltransferase (328 aa).

It belongs to the PlsX family. In terms of assembly, homodimer. Probably interacts with PlsY.

It is found in the cytoplasm. The catalysed reaction is a fatty acyl-[ACP] + phosphate = an acyl phosphate + holo-[ACP]. The protein operates within lipid metabolism; phospholipid metabolism. Catalyzes the reversible formation of acyl-phosphate (acyl-PO(4)) from acyl-[acyl-carrier-protein] (acyl-ACP). This enzyme utilizes acyl-ACP as fatty acyl donor, but not acyl-CoA. This Mycoplasma pneumoniae (strain ATCC 29342 / M129 / Subtype 1) (Mycoplasmoides pneumoniae) protein is Phosphate acyltransferase.